The chain runs to 469 residues: Desmin (469 aa).

The tract at residues 2–107 (SQAYSSSQRV…QEFLTTRTNE (106 aa)) is head. Ser7 is subject to Phosphoserine; by CDK1. Ser12 is modified (phosphoserine; by AURKB). Arg16 is modified (omega-N-methylarginine). Thr17 carries the phosphothreonine; by AURKB and ROCK1 modification. A phosphoserine; by CDK1 mark is found at Ser28 and Ser32. Arg37 is subject to Asymmetric dimethylarginine; alternate. At Arg37 the chain carries Omega-N-methylarginine; alternate. Ser45 bears the Phosphoserine mark. ADP-ribosylarginine is present on Arg58. Ser60 is subject to Phosphoserine; by AURKB. An Omega-N-methylarginine modification is found at Arg70. Residue Thr76 is modified to Phosphothreonine; by ROCK1. Ser81 carries the phosphoserine modification. An IF rod domain is found at 107–415 (EKVELQELND…KLLEGEESRI (309 aa)). A coil 1A region spans residues 108 to 140 (KVELQELNDRFANYIEKVRFLEQQNAALAAEVN). Residues 141-150 (RLKGREPTRV) form a linker 1 region. The coil 1B stretch occupies residues 151–251 (AEIYEEELRE…HEEEIRELQA (101 aa)). The linker 12 stretch occupies residues 252 to 267 (QLQEQQVQVEMDMSKP). Positions 267 to 414 (PDLTAALRDI…RKLLEGEESR (148 aa)) are interaction with NEB. The coil 2A stretch occupies residues 268 to 286 (DLTAALRDIRAQYETIAAK). The segment at 287-294 (NISEAEEW) is linker 2. Ser289, Ser357, Ser360, and Ser423 each carry phosphoserine. The coil 2B stretch occupies residues 295–411 (YKSKVSDLTQ…ATYRKLLEGE (117 aa)). Residues 412 to 469 (ESRINLPIQTYSALNFRETSPEQRGSEVHTKKTVMIKTIETRDGEVVSEATQQQHEVL) form a tail region. The interaction with CRYAB stretch occupies residues 437–452 (SEVHTKKTVMIKTIET).

It belongs to the intermediate filament family. In terms of assembly, homomer. Interacts with DST. Interacts with MTM1. Interacts with EPPK1; interaction is dependent of higher-order structure of intermediate filament. Interacts with CRYAB. Interacts with NEB (via nebulin repeats 160-164). Interacts (via rod region) with NEBL (via nebulin repeats 1-5). Interacts with ASB2; the interaction targets DES for proteasomal degradation. Interacts with PKP1. Interacts with FLII. Post-translationally, ADP-ribosylation prevents ability to form intermediate filaments. In terms of processing, phosphorylation at Ser-7, Ser-28 and Ser-32 by CDK1, phosphorylation at Ser-60 by AURKB and phosphorylation at Thr-76 by ROCK1 contribute to efficient separation of desmin intermediate filaments during mitosis. Ubiquitination by a SCF-like complex containing ASB2 leads to proteasomal degradation.

The protein localises to the cytoplasm. The protein resides in the myofibril. It localises to the sarcomere. It is found in the z line. Its subcellular location is the cell membrane. The protein localises to the sarcolemma. The protein resides in the nucleus. It localises to the cell tip. It is found in the nucleus envelope. In terms of biological role, muscle-specific type III intermediate filament essential for proper muscular structure and function. Plays a crucial role in maintaining the structure of sarcomeres, inter-connecting the Z-disks and forming the myofibrils, linking them not only to the sarcolemmal cytoskeleton, but also to the nucleus and mitochondria, thus providing strength for the muscle fiber during activity. In adult striated muscle they form a fibrous network connecting myofibrils to each other and to the plasma membrane from the periphery of the Z-line structures. May act as a sarcomeric microtubule-anchoring protein: specifically associates with detyrosinated tubulin-alpha chains, leading to buckled microtubules and mechanical resistance to contraction. Required for nuclear membrane integrity, via anchoring at the cell tip and nuclear envelope, resulting in maintenance of microtubule-derived intracellular mechanical forces. Contributes to the transcriptional regulation of the NKX2-5 gene in cardiac progenitor cells during a short period of cardiomyogenesis and in cardiac side population stem cells in the adult. Plays a role in maintaining an optimal conformation of nebulette (NEB) on heart muscle sarcomeres to bind and recruit cardiac alpha-actin. The sequence is that of Desmin (DES) from Canis lupus familiaris (Dog).